The chain runs to 360 residues: Phospho-N-acetylmuramoyl-pentapeptide-transferase (360 aa).

The next 10 membrane-spanning stretches (helical) occupy residues 25–45 (RGIL…PWMI), 73–93 (TMGG…WADL), 97–117 (YVWV…VDDY), 132–152 (WKYF…YMTA), 168–188 (VSIP…VGSS), 199–219 (GLAI…CYLS), 236–256 (AGEL…FLWF), 263–283 (VFMG…IAVI), 288–308 (IVLF…VIQV), and 338–358 (VIVR…ATLK).

The protein belongs to the glycosyltransferase 4 family. MraY subfamily. Mg(2+) is required as a cofactor.

The protein resides in the cell inner membrane. It catalyses the reaction UDP-N-acetyl-alpha-D-muramoyl-L-alanyl-gamma-D-glutamyl-meso-2,6-diaminopimeloyl-D-alanyl-D-alanine + di-trans,octa-cis-undecaprenyl phosphate = di-trans,octa-cis-undecaprenyl diphospho-N-acetyl-alpha-D-muramoyl-L-alanyl-D-glutamyl-meso-2,6-diaminopimeloyl-D-alanyl-D-alanine + UMP. It participates in cell wall biogenesis; peptidoglycan biosynthesis. Its function is as follows. Catalyzes the initial step of the lipid cycle reactions in the biosynthesis of the cell wall peptidoglycan: transfers peptidoglycan precursor phospho-MurNAc-pentapeptide from UDP-MurNAc-pentapeptide onto the lipid carrier undecaprenyl phosphate, yielding undecaprenyl-pyrophosphoryl-MurNAc-pentapeptide, known as lipid I. In Pseudomonas fluorescens (strain ATCC BAA-477 / NRRL B-23932 / Pf-5), this protein is Phospho-N-acetylmuramoyl-pentapeptide-transferase.